A 375-amino-acid chain; its full sequence is Negative elongation factor E (375 aa).

Positions 7–36 form a coiled coil; sequence GLSEEEEALQKKFNKLKKKKKALLALKKQS. The interval 30–58 is disordered; that stretch reads LALKKQSSSGPASQGGVKRSLSEQPVVDT. S51 carries the post-translational modification Phosphoserine. K78 participates in a covalent cross-link: Glycyl lysine isopeptide (Lys-Gly) (interchain with G-Cter in SUMO1); alternate. K78 participates in a covalent cross-link: Glycyl lysine isopeptide (Lys-Gly) (interchain with G-Cter in SUMO2); alternate. Residues 79–262 form a disordered region; the sequence is AETKNSGFKR…SDSFPERRAP (184 aa). K82 participates in a covalent cross-link: Glycyl lysine isopeptide (Lys-Gly) (interchain with G-Cter in SUMO2). Residues 90-101 are compositionally biased toward basic and acidic residues; sequence RTLEGKLKDPEK. 2 positions are modified to phosphoserine: S113 and S115. PolyADP-ribosyl glutamic acid is present on E122. Phosphoserine occurs at positions 131 and 139. E151 is subject to PolyADP-ribosyl glutamic acid. Residues 155–167 are compositionally biased toward low complexity; it reads APGAGDGPPRGFD. E172 carries the polyADP-ribosyl glutamic acid modification. 4 positions are modified to phosphoserine: S179, S181, S185, and S187. 4 repeat units span residues 184-185, 186-187, 188-189, and 190-191. The interval 184-247 is 32 X 2 AA approximate tandem repeats of R-[DSE]; the sequence is RSRSRDRSHD…RDRDRERDRE (64 aa). Residues 186–260 are compositionally biased toward basic and acidic residues; sequence RSRDRSHDRS…RRSDSFPERR (75 aa). Residue S191 is modified to Phosphoserine. One copy of the 5; approximate repeat lies at 192-193; that stretch reads HD. Repeat copies occupy residues 194–195, 196–197, 198–199, and 200–201. The stretch at 202-203 is one 10; approximate repeat; the sequence is KE. Repeat copies occupy residues 204–205, 206–207, 208–209, 210–211, 212–213, 214–215, and 216–217. Residues 218–219 form an 18; approximate repeat; the sequence is KD. The stretch at 220 to 221 is one 19; approximate repeat; sequence KD. 4 consecutive repeat copies span residues 222 to 223, 224 to 225, 226 to 227, and 228 to 229. Residues 230-231 form a 24; approximate repeat; sequence KE. 8 consecutive repeat copies span residues 232 to 233, 234 to 235, 236 to 237, 238 to 239, 240 to 241, 242 to 243, 244 to 245, and 246 to 247. Phosphoserine occurs at positions 253 and 255. Positions 266–336 constitute an RRM domain; it reads NTLYVYGEDM…VQLKVNIARK (71 aa). Phosphothreonine occurs at positions 276 and 278. Phosphoserine occurs at positions 285 and 357.

The protein belongs to the RRM NELF-E family. As to quaternary structure, the NELF complex is composed of NELFA, NELFB, NELFCD and NELFE. Interacts with NELFB. Post-translationally, phosphorylated by the P-TEFb complex at sites next to its RNA recognition motif, promoting its release from chromatin. Sumoylated. In terms of processing, poly-ADP-ribosylated by PARP1, thereby preventing RNA-binding and relieving transcription pausing.

The protein resides in the nucleus. It localises to the chromosome. Functionally, essential component of the NELF complex, a complex that negatively regulates the elongation of transcription by RNA polymerase II. The NELF complex, which acts via an association with the DSIF complex and causes transcriptional pausing, is counteracted by the P-TEFb kinase complex. Provides the strongest RNA binding activity of the NELF complex and may initially recruit the NELF complex to RNA. The chain is Negative elongation factor E (Nelfe) from Mus musculus (Mouse).